Reading from the N-terminus, the 613-residue chain is YTH domain-containing family protein 2 (613 aa).

Disordered stretches follow at residues 1-43 (MSAS…AQPR), 215-234 (SQVS…AKTA), and 244-396 (AKPQ…TVPA). The segment at 2–397 (SASSLLEQRP…GMGGITVPAE (396 aa)) is localization to mRNA processing bodies (P-bodies). A compositionally biased stretch (polar residues) spans 16 to 27 (NKVQNGAVTQKD). Composition is skewed to low complexity over residues 218–234 (STAP…AKTA), 295–307 (NGQP…PQPG), and 345–360 (PPQL…PSQP). Residues 398-613 (PHPVLEKLRM…RMQDRQGRVK (216 aa)) form an interaction with m6A-containing mRNAs region. The 135-residue stretch at 423–557 (GRVFIIKSYS…DKARQVLKII (135 aa)) folds into the YTH domain. RNA contacts are provided by residues 429-431 (KSY), Asp435, 445-446 (WC), Asn475, Trp499, and Trp504. 2 stretches are compositionally biased toward basic and acidic residues: residues 578-587 (EEEESVKKVE) and 604-613 (RMQDRQGRVK). The interval 578-613 (EEEESVKKVEVQGSDPYSNNSSRSHYRMQDRQGRVK) is disordered.

Belongs to the YTHDF family. YTHDF2 subfamily.

It is found in the cytoplasm. Its subcellular location is the cytosol. It localises to the P-body. The protein resides in the stress granule. The protein localises to the nucleus. Functionally, specifically recognizes and binds N6-methyladenosine (m6A)-containing RNAs, and regulates their stability. M6A is a modification present at internal sites of mRNAs and some non-coding RNAs and plays a role in mRNA stability and processing. Acts as a regulator of mRNA stability by promoting degradation of m6A-containing mRNAs. The YTHDF paralogs (ythdf1, ythdf2 and ythdf3) share m6A-containing mRNAs targets and act redundantly to mediate mRNA degradation and cellular differentiation. Plays a key role in maternal-to-zygotic transition during early embryonic development, the process during which maternally inherited mRNAs are degraded: acts by binding m6A-containing maternal mRNAs and promoting their degradation. More than one-third of maternal mRNAs can be modified by m6A. Binding to m6A-containing mRNAs results in mRNA degradation. Also involved in hematopoietic stem cells specification by binding to m6A-containing mRNAs, such as notch1a, and promote their degradation. The decreased Notch signaling following notch1a degradation promotes endothelial to hematopoietic transition. Promotes formation of phase-separated membraneless compartments, such as P-bodies or stress granules, by undergoing liquid-liquid phase separation upon binding to mRNAs containing multiple m6A-modified residues: polymethylated mRNAs act as a multivalent scaffold for the binding of YTHDF proteins, juxtaposing their disordered regions and thereby leading to phase separation. The resulting mRNA-YTHDF complexes then partition into different endogenous phase-separated membraneless compartments, such as P-bodies, stress granules or neuronal RNA granules. The chain is YTH domain-containing family protein 2 from Danio rerio (Zebrafish).